The primary structure comprises 205 residues: Protein Rcp (205 aa).

The protein belongs to the NAD(P)-dependent epimerase/dehydratase family.

In Vibrio cholerae serotype O1 (strain ATCC 39315 / El Tor Inaba N16961), this protein is Protein Rcp (rcp).